The following is a 245-amino-acid chain: tRNA pseudouridine synthase A (245 aa).

The Nucleophile role is filled by D52. A substrate-binding site is contributed by Y111.

Belongs to the tRNA pseudouridine synthase TruA family. As to quaternary structure, homodimer.

It carries out the reaction uridine(38/39/40) in tRNA = pseudouridine(38/39/40) in tRNA. Formation of pseudouridine at positions 38, 39 and 40 in the anticodon stem and loop of transfer RNAs. This Rhodopseudomonas palustris (strain HaA2) protein is tRNA pseudouridine synthase A.